The chain runs to 640 residues: MPTITLPDGSQRSFDHAVSVADVALSIGAGLAKATVAGKVDGKLVDACDLIENDASLQIITPKDAEGLEIIRHSCAHLVGHAVKQLYPTAKMVIGPVIDDGFYYDIAYERPFTPDDLAAIEQRMQQLIEKDYDVIKKVTPRAEVIEVFTARHEDYKLRLVEGMPDEQAMGLYYHEEYVDMCRGPHVPNTRFLKSFKLTKLSGAYWRGDAKNEQLQRVYGTAWADKKQLAAYIQRIEEAEKRDHRKIGKRLGLFHTQEEAPGMVFWHPQGWTLYQVLEQYMRKVQRENGYLEIKTPQVVDRSLWEKSGHWANYADNMFTTQSESRDYAIKPMNCPCHVQVFNQGLKSYRELPLRLAEFGACHRNEPSGALHGIMRVRGFTQDDAHIFCTEDQMQAESAAFIKLTLDVYADFGFKDIELKLSTRPEKRVGSDELWDRAESALASALDSAGLPYDLQPGEGAFYGPKIEFSLKDCLGRVWQCGTLQLDFNLPIRLSAEYVSEDNSRKNPVMLHRAILGSFERFIGILIEHYEGAFPAWLAPTQAVIMNITDKQADFALEVEKTLAESGFRAKSDLRNEKIGFKIREHTLLKVPYLLVIGDREVEMQTVAVRTREGADLGSMPVAQFAEFLAQAVSRRGRQDTE.

A TGS domain is found at 1-61; that stretch reads MPTITLPDGS…ENDASLQIIT (61 aa). The interval 242-533 is catalytic; it reads DHRKIGKRLG…LIEHYEGAFP (292 aa). Zn(2+)-binding residues include C333, H384, and H510.

It belongs to the class-II aminoacyl-tRNA synthetase family. As to quaternary structure, homodimer. Zn(2+) is required as a cofactor.

The protein localises to the cytoplasm. It carries out the reaction tRNA(Thr) + L-threonine + ATP = L-threonyl-tRNA(Thr) + AMP + diphosphate + H(+). Its function is as follows. Catalyzes the attachment of threonine to tRNA(Thr) in a two-step reaction: L-threonine is first activated by ATP to form Thr-AMP and then transferred to the acceptor end of tRNA(Thr). Also edits incorrectly charged L-seryl-tRNA(Thr). The polypeptide is Threonine--tRNA ligase (Pseudomonas syringae pv. tomato (strain ATCC BAA-871 / DC3000)).